The following is a 409-amino-acid chain: Na(+)/H(+) antiporter NhaA 2 (409 aa).

The next 12 helical transmembrane spans lie at 10–30 (VAAG…NTPA), 60–80 (GLLV…FLAG), 89–109 (LVPA…YLAI), 118–138 (GWPV…AVFG), 148–168 (FLLA…AVFF), 171–191 (GLDL…AVVG), 203–223 (IAVV…TLSS), 224–244 (GIHA…LSGL), 257–277 (IVLP…IGLA), 283–303 (FWGI…AGGL), 328–348 (LLGG…FAGL), and 356–376 (TLAV…TLSI). The interval 384–409 (AGAAADDDDATRDDFPAHADGGPARA) is disordered.

It belongs to the NhaA Na(+)/H(+) (TC 2.A.33) antiporter family.

The protein resides in the cell membrane. It catalyses the reaction Na(+)(in) + 2 H(+)(out) = Na(+)(out) + 2 H(+)(in). Na(+)/H(+) antiporter that extrudes sodium in exchange for external protons. The sequence is that of Na(+)/H(+) antiporter NhaA 2 from Clavibacter michiganensis subsp. michiganensis (strain NCPPB 382).